A 95-amino-acid polypeptide reads, in one-letter code: Large ribosomal subunit protein bL25 (95 aa).

This sequence belongs to the bacterial ribosomal protein bL25 family. As to quaternary structure, part of the 50S ribosomal subunit; part of the 5S rRNA/L5/L18/L25 subcomplex. Contacts the 5S rRNA. Binds to the 5S rRNA independently of L5 and L18.

Functionally, this is one of the proteins that binds to the 5S RNA in the ribosome where it forms part of the central protuberance. The chain is Large ribosomal subunit protein bL25 from Buchnera aphidicola subsp. Acyrthosiphon pisum (strain 5A).